The primary structure comprises 688 residues: Elongation factor G (688 aa).

The tr-type G domain maps to 8 to 282 (EKTRNIGIIA…AVVDYLPAPC (275 aa)). GTP is bound by residues 17–24 (AHIDAGKT), 81–85 (DTPGH), and 135–138 (NKMD).

The protein belongs to the TRAFAC class translation factor GTPase superfamily. Classic translation factor GTPase family. EF-G/EF-2 subfamily.

Its subcellular location is the cytoplasm. Functionally, catalyzes the GTP-dependent ribosomal translocation step during translation elongation. During this step, the ribosome changes from the pre-translocational (PRE) to the post-translocational (POST) state as the newly formed A-site-bound peptidyl-tRNA and P-site-bound deacylated tRNA move to the P and E sites, respectively. Catalyzes the coordinated movement of the two tRNA molecules, the mRNA and conformational changes in the ribosome. This chain is Elongation factor G, found in Aster yellows witches'-broom phytoplasma (strain AYWB).